The chain runs to 260 residues: 3'-5' ssDNA/RNA exonuclease TatD (260 aa).

A divalent metal cation is bound by residues E92, H128, and H153.

The protein belongs to the metallo-dependent hydrolases superfamily. TatD-type hydrolase family. TatD subfamily. Monomer. Mg(2+) serves as cofactor.

The protein localises to the cytoplasm. Its function is as follows. 3'-5' exonuclease that prefers single-stranded DNA and RNA. May play a role in the H(2)O(2)-induced DNA damage repair. The polypeptide is 3'-5' ssDNA/RNA exonuclease TatD (Pantoea vagans (strain C9-1) (Pantoea agglomerans (strain C9-1))).